Here is a 366-residue protein sequence, read N- to C-terminus: Sec-independent protein translocase protein TatC (366 aa).

7 helical membrane-spanning segments follow: residues 42–62 (VLAVLVLFLILFPFRNELFTM), 70–90 (HMPAGSTMIAVEVASPFFIPL), 97–117 (AVFIAIPFLLYQLWAFIAPGL), 134–154 (ILFYLGAAFAYFVVFPVVFGF), 179–199 (LFFAFGFVFEVPVAIVLLVIV), 207–227 (LAGFRRYAILIAFIIAAILTP), and 230–250 (VLSQFMMALPIIMLYEFGLFV). Positions 266–279 (EAEESGAADDESDE) are enriched in acidic residues. A disordered region spans residues 266 to 366 (EAEESGAADD…PSPKKPDSPV (101 aa)). Basic and acidic residues-rich tracts occupy residues 281-290 (VSARHAEYEA) and 301-318 (DMDKAFDEAEADQRRLES). Positions 319–333 (DSSASDDGPESNTAG) are enriched in polar residues.

It belongs to the TatC family. In terms of assembly, the Tat system comprises two distinct complexes: a TatABC complex, containing multiple copies of TatA, TatB and TatC subunits, and a separate TatA complex, containing only TatA subunits. Substrates initially bind to the TatABC complex, which probably triggers association of the separate TatA complex to form the active translocon.

It localises to the cell inner membrane. Functionally, part of the twin-arginine translocation (Tat) system that transports large folded proteins containing a characteristic twin-arginine motif in their signal peptide across membranes. Together with TatB, TatC is part of a receptor directly interacting with Tat signal peptides. This is Sec-independent protein translocase protein TatC from Halothiobacillus neapolitanus (strain ATCC 23641 / c2) (Thiobacillus neapolitanus).